The sequence spans 81 residues: YcgL domain-containing protein Tgr7_3126 (81 aa).

Residues Met-1–Leu-81 enclose the YcgL domain.

The chain is YcgL domain-containing protein Tgr7_3126 from Thioalkalivibrio sulfidiphilus (strain HL-EbGR7).